The chain runs to 555 residues: MVAACRSVAGLLPRRRRCFPARAPLLRVALCLLCWTPAAVRAVPELGLWLETVNDKSGPLIFRKTMFNSTDIKLSVKSFHCSGPVKFTIVWHLKYHTCHNEHSNLEELFQKHKLSVDEDFCHYLKNDNCWTTKNENLDCNSDSQVFPSLNNKELINIRNVSNQERSMDVVARTQKDGFHIFIVSIKTENTDASWNLNVSLSMIGPHGYISASDWPLMIFYMVMCIVYILYGILWLTWSACYWKDILRIQFWIAAVIFLGMLEKAVFYSEYQNISNTGLSTQGLLIFAELISAIKRTLARLLVIIVSLGYGIVKPRLGTVMHRVIGLGLLYLIFAAVEGVMRVIGGSNHLAVVLDDIILAVIDSIFVWFIFISLAQTMKTLRLRKNTVKFSLYRHFKNTLIFAVLASIVFMGWTTKTFRIAKCQSDWMERWVDDAFWSFLFSLILIVIMFLWRPSANNQRYAFMPLIDDSDDEIEEFMVTSENLTEGIKLRASKSVSNGTAKPATSENFDEDLKWVEENIPSSFTDVALPVLVDSDEEIMTRSEMAEKMFSSEKIM.

The signal sequence occupies residues 1-42 (MVAACRSVAGLLPRRRRCFPARAPLLRVALCLLCWTPAAVRA). The Lumenal portion of the chain corresponds to 43-214 (VPELGLWLET…PHGYISASDW (172 aa)). N-linked (GlcNAc...) asparagine glycans are attached at residues asparagine 68 and asparagine 197. Residues 215–235 (PLMIFYMVMCIVYILYGILWL) form a helical membrane-spanning segment. The Cytoplasmic portion of the chain corresponds to 236–247 (TWSACYWKDILR). A helical transmembrane segment spans residues 248–268 (IQFWIAAVIFLGMLEKAVFYS). The Lumenal segment spans residues 269-299 (EYQNISNTGLSTQGLLIFAELISAIKRTLAR). Residue asparagine 272 is glycosylated (N-linked (GlcNAc...) asparagine). A helical membrane pass occupies residues 300–320 (LLVIIVSLGYGIVKPRLGTVM). At 321 to 322 (HR) the chain is on the cytoplasmic side. The helical transmembrane segment at 323-343 (VIGLGLLYLIFAAVEGVMRVI) threads the bilayer. The Lumenal portion of the chain corresponds to 344–350 (GGSNHLA). Residues 351–371 (VVLDDIILAVIDSIFVWFIFI) form a helical membrane-spanning segment. The Cytoplasmic portion of the chain corresponds to 372–396 (SLAQTMKTLRLRKNTVKFSLYRHFK). Residues 397–417 (NTLIFAVLASIVFMGWTTKTF) traverse the membrane as a helical segment. The Lumenal segment spans residues 418-429 (RIAKCQSDWMER). The chain crosses the membrane as a helical span at residues 430–450 (WVDDAFWSFLFSLILIVIMFL). Residues 451–555 (WRPSANNQRY…EKMFSSEKIM (105 aa)) lie on the Cytoplasmic side of the membrane. 4 positions are modified to phosphoserine: serine 469, serine 494, serine 496, and serine 534.

Belongs to the LU7TM family. TMEM87 subfamily.

Its subcellular location is the golgi apparatus membrane. Functionally, may be involved in retrograde transport from endosomes to the trans-Golgi network (TGN). The sequence is that of Transmembrane protein 87B from Homo sapiens (Human).